Reading from the N-terminus, the 236-residue chain is uncharacterized protein (236 aa).

The GP-PDE domain occupies 4–236 (QFLIAYRGYS…VKFQITAQIY (233 aa)).

The protein to glycerophosphoryl diester phosphodiesterases (EC 3.1.4.46). To M.genitalium MG293.

This is an uncharacterized protein from Mycoplasma genitalium (strain ATCC 33530 / DSM 19775 / NCTC 10195 / G37) (Mycoplasmoides genitalium).